We begin with the raw amino-acid sequence, 71 residues long: Pre-hexon-linking protein VIII (71 aa).

The protein belongs to the adenoviridae hexon-linking protein family. As to quaternary structure, interacts with the peripentonal hexons as well as the hexons in the facets. Part of a complex composed of the core-capsid bridging protein, the endosome lysis protein VI and the hexon-linking protein VIII; these interactions bridge the virus core to the capsid. In terms of processing, cleaved by the viral protease during virion maturation. May cause the middle segment to be shed from the capsid.

The protein resides in the host nucleus. Its subcellular location is the virion. Structural component of the virion that acts as a cement protein on the capsid interior and which glue the peripentonal hexons and group-of-nine hexons together. The protein is Pre-hexon-linking protein VIII of Canine adenovirus serotype 1 (strain Glaxo) (CAdV-1).